The following is a 257-amino-acid chain: MNPLIIKLGGVLLDSEEALERLFTALVNYRESHQRPLVIVHGGGCVVDELMKGLNLPVKKKDGLRVTPADQIGIITGALAGTANKTLLAWAKKHHIASVGLFLGDGDSVNVTQLNEALGHVGLAQPGSPKLINMLLENGFLPVVSSIGVTDDGQLMNVNADQAATALAATLGADLILLSDVSGILDGKGQRIAEMTASKAEQLIDQGIITDGMIVKVNAALDAARALGRPVDIASWRHAEQLPALFNGTPIGTRILA.

Substrate contacts are provided by residues 43–44 (GG), Arg65, and Asn157. ATP contacts are provided by residues 180–185 (DVSGIL) and 208–210 (IIT).

The protein belongs to the acetylglutamate kinase family. ArgB subfamily. Homodimer.

The protein localises to the cytoplasm. It carries out the reaction N-acetyl-L-glutamate + ATP = N-acetyl-L-glutamyl 5-phosphate + ADP. It functions in the pathway amino-acid biosynthesis; L-arginine biosynthesis; N(2)-acetyl-L-ornithine from L-glutamate: step 2/4. In terms of biological role, catalyzes the ATP-dependent phosphorylation of N-acetyl-L-glutamate. The chain is Acetylglutamate kinase from Salmonella paratyphi B (strain ATCC BAA-1250 / SPB7).